Reading from the N-terminus, the 5541-residue chain is Malpibaldin synthetase (5541 aa).

The segment covering 1–13 (MGDKRPDGIKSAE) has biased composition (basic and acidic residues). A disordered region spans residues 1–26 (MGDKRPDGIKSAESHGQPSAPFGAEN). Residues 137 to 378 (KEDDIARDES…IDIISPAEKT (242 aa)) form a condensation 1 region. Residues 401-799 (FEEQVDKSPD…GRNDDQVKIR (399 aa)) form an adenylation 1 region. The Carrier 1 domain occupies 901–975 (VPCGETEDAI…VLAQDLSKHQ (75 aa)). Ser936 carries the O-(pantetheine 4'-phosphoryl)serine modification. Residues 1021 to 1469 (QDVYSLAPLQ…LPLDERTKLL (449 aa)) form a dual epimerase/condensation (E/C) domain 1 region. An adenylation 2 region spans residues 1489-1899 (FEQQVKQSPI…GRNDDQIKIR (411 aa)). The Carrier 2 domain maps to 2001 to 2075 (SPQGRIECAL…SFAQAFKGQL (75 aa)). Ser2036 is modified (O-(pantetheine 4'-phosphoryl)serine). The interval 2095 to 2537 (ELSFSQQRLW…LGSTEEELLL (443 aa)) is condensation 2. The tract at residues 2557 to 2956 (FEDQVERSPD…GRNDDQVKIR (400 aa)) is adenylation 3. Positions 3058–3132 (EPQGEVEMKL…VLAASITRGC (75 aa)) constitute a Carrier 3 domain. O-(pantetheine 4'-phosphoryl)serine is present on Ser3093. The segment at 3182–3616 (QDIYSLSPLQ…VIPAEEHDLL (435 aa)) is dual epimerase/condensation (E/C) domain 2. The segment at 3637-4038 (FENQVRERPE…GRNDEQVKIR (402 aa)) is adenylation 4. In terms of domain architecture, Carrier 4 spans 4140-4214 (APRGDIEISL…VLAASLNTHQ (75 aa)). Ser4175 is subject to O-(pantetheine 4'-phosphoryl)serine. The interval 4260-4695 (VQDVYSLSPL…VIPAEEHDLL (436 aa)) is dual epimerase/condensation (E/C) domain 3. Residues 4716–5117 (FENQVRERPE…GRNDEQVKIR (402 aa)) form an adenylation 5 region. One can recognise a Carrier 5 domain in the interval 5219-5294 (LPSGDVEIGL…ELAQKLVQGG (76 aa)). The residue at position 5254 (Ser5254) is an O-(pantetheine 4'-phosphoryl)serine. A thioesterase (TE) domain region spans residues 5315–5523 (PLFCIHSGLG…VECTHIEMDK (209 aa)).

Belongs to the NRP synthetase family.

Nonribosomal peptide synthetase that catalyzes the biosynthesis of the hydrophobic cyclopentapeptides malpibaldins, natural products that show biosurfactant activities. Module 3 shows promiscuous adenylation (accepting either Trp, Phe or Tyr) leading to the parallel production of multiple products from one NRPS assembly line, including malpibaldin A corresponding to cyclo(-L-Leu-D-Leu-D-Phe-L-Leu-D-Val-), malpibaldin B corresponding to cyclo(-L-Leu-D-Leu-D-Tyr-L-Leu-D-Val-) and malpibaldin C corresponding to cyclo(-Leu-Leu-Trp-Leu-Val-). This Mortierella alpina (Oleaginous fungus) protein is Malpibaldin synthetase.